Here is a 311-residue protein sequence, read N- to C-terminus: Protoheme IX farnesyltransferase (311 aa).

9 helical membrane-spanning segments follow: residues 33 to 53, 55 to 75, 104 to 124, 127 to 147, 155 to 175, 181 to 201, 228 to 248, 252 to 272, and 287 to 307; these read VVMLMLLTSLIGMLLATPSPA, LWLLVLGNLGIGLCAGAAAAV, NALLFSALLGGVGLWILSSFI, LTAWLTLASLLGYAVIYTLFL, IVIGGLAGAAPPLLGWTAVTG, GLLLVLIIFAWTPPHFWALAL, IVLYTVILIAVTLLPFATRMM, YLVGALVLGAGFLYRALKLLV, and IIYLMALFVVMLVDHYLFPIP.

It belongs to the UbiA prenyltransferase family. Protoheme IX farnesyltransferase subfamily.

It localises to the cell inner membrane. The catalysed reaction is heme b + (2E,6E)-farnesyl diphosphate + H2O = Fe(II)-heme o + diphosphate. It participates in porphyrin-containing compound metabolism; heme O biosynthesis; heme O from protoheme: step 1/1. In terms of biological role, converts heme B (protoheme IX) to heme O by substitution of the vinyl group on carbon 2 of heme B porphyrin ring with a hydroxyethyl farnesyl side group. In Teredinibacter turnerae (strain ATCC 39867 / T7901), this protein is Protoheme IX farnesyltransferase.